A 371-amino-acid polypeptide reads, in one-letter code: MMVPSFILWDVGSSVYTYGSLFIIALIIWHVRRSHRGLRLGPIKSCTKCFRRIKQKPSDRTLRVKKRTTKEETEKLQKLLSNMKRQGWLPQEGSVRRLLCSDPSCPICNAMALEIQQLLGVENKKTSSSLLRHSRSFSCLEALSPPKVLNDQSSELSKVLNGQSSELSKVLNGQSSELSKVLNDQSSELSKVLNDQSSELSSQHSKDISLPPKFMQSQSTDQKLTLSAPLSTGNTVLQCYHPAPQQQPEPQGSNAFQDVSGLSSSSMDEHGVPANQQKKRKKTKKLVSKNQAAPSEAEMENKMTFFSHWVNPEVKCDRPEESFAFYKSETGAKPKTGEPKKSSAKVRAEEPNLEKHAKDLKAKPLHAKRNI.

A helical membrane pass occupies residues 7–29 (ILWDVGSSVYTYGSLFIIALIIW). Residues 62 to 86 (LRVKKRTTKEETEKLQKLLSNMKRQ) adopt a coiled-coil conformation. Polar residues-rich tracts occupy residues 189–203 (LSKVLNDQSSELSSQ) and 244–266 (PQQQPEPQGSNAFQDVSGLSSSS). 3 disordered regions span residues 189–222 (LSKVLNDQSSELSSQHSKDISLPPKFMQSQSTDQ), 240–299 (YHPA…EAEM), and 326–371 (YKSE…KRNI). A phosphoserine mark is found at serine 197 and serine 198. The span at 277 to 287 (QKKRKKTKKLV) shows a compositional bias: basic residues. Over residues 330 to 362 (TGAKPKTGEPKKSSAKVRAEEPNLEKHAKDLKA) the composition is skewed to basic and acidic residues.

This sequence belongs to the SPATA31 family.

The protein localises to the membrane. The protein is Protein SPATA31F3 (Spata31f3) of Mus musculus (Mouse).